Reading from the N-terminus, the 302-residue chain is S-crystallin SL4 (302 aa).

Tandem repeats lie at residues 45-54 (GGYAVQSRGD), 55-64 (GGYYVKSRGD), and 65-74 (GGYPVQGRGD). Residues 45 to 84 (GGYAVQSRGDGGYYVKSRGDGGYPVQGRGDTGYSSQTRSD) form a 4 X approximate tandem repeats of G-G-Y-[AYP]-V-[QK]-[SG]-R-G-D region. 3 consecutive short sequence motifs (cell attachment site) follow at residues 52-54 (RGD), 62-64 (RGD), and 72-74 (RGD). The segment at 68–92 (PVQGRGDTGYSSQTRSDDACLGQGR) is disordered. A 4; approximate repeat occupies 75–84 (TGYSSQTRSD). The Cell attachment site signature appears at 113 to 115 (RGD). Residues 118-205 (SDINSGLYSG…ESASRRSRNH (88 aa)) are disordered. 2 stretches are compositionally biased toward basic and acidic residues: residues 129–166 (RMDDSCHTSESRRMDDPCGTDESRRLDVPCHSDDHYRS) and 177–192 (AEDRRGGHSDSHRIDI). Residues 183–302 (GHSDSHRIDI…YIKRRYQSDF (120 aa)) enclose the GST C-terminal domain.

This sequence belongs to the GST superfamily.

Its function is as follows. S-crystallins are structural components of squids and octopi eye lens. This is S-crystallin SL4 from Nototodarus sloanii (Wellington flying squid).